Reading from the N-terminus, the 85-residue chain is Cysteine-rich venom protein 1 (85 aa).

Residues Met-1–Ala-21 form the signal peptide. 5 disulfides stabilise this stretch: Cys-29-Cys-63, Cys-38-Cys-59, Cys-42-Cys-53, Cys-46-Cys-84, and Cys-65-Cys-78. Residues Cys-29–Cys-84 enclose the TIL domain.

This sequence belongs to the serine protease inhibitor-like (TIL domain-containing) family. In terms of tissue distribution, expressed by the venom gland.

It localises to the secreted. Its function is as follows. May be a phenoloxidase inhibitor that stabilizes or inhibits venom phenoloxidase while it is stored in the venom sac. In Pimpla hypochondriaca (Parasitoid wasp), this protein is Cysteine-rich venom protein 1.